Here is a 181-residue protein sequence, read N- to C-terminus: Shikimate kinase 2 (181 aa).

Residue 12 to 17 coordinates ATP; sequence GCGKTT. Mg(2+) contacts are provided by threonine 16 and aspartate 32. Aspartate 34, arginine 58, and glycine 79 together coordinate substrate. The tract at residues 112 to 126 is LID domain; sequence EAEPEADLRPTLTGK. Arginine 120 contributes to the ATP binding site. Arginine 139 is a binding site for substrate.

It belongs to the shikimate kinase family. AroL subfamily. Monomer. Mg(2+) is required as a cofactor.

It localises to the cytoplasm. It carries out the reaction shikimate + ATP = 3-phosphoshikimate + ADP + H(+). The protein operates within metabolic intermediate biosynthesis; chorismate biosynthesis; chorismate from D-erythrose 4-phosphate and phosphoenolpyruvate: step 5/7. In terms of biological role, catalyzes the specific phosphorylation of the 3-hydroxyl group of shikimic acid using ATP as a cosubstrate. This Salmonella enteritidis PT4 (strain P125109) protein is Shikimate kinase 2.